A 161-amino-acid polypeptide reads, in one-letter code: Nucleotide-binding protein ABO_0048 (161 aa).

This sequence belongs to the YajQ family.

Its function is as follows. Nucleotide-binding protein. In Alcanivorax borkumensis (strain ATCC 700651 / DSM 11573 / NCIMB 13689 / SK2), this protein is Nucleotide-binding protein ABO_0048.